A 201-amino-acid polypeptide reads, in one-letter code: Histidinol dehydrogenase (201 aa).

This sequence belongs to the histidinol dehydrogenase family. In terms of assembly, homodimer. Zn(2+) is required as a cofactor.

The enzyme catalyses L-histidinol + 2 NAD(+) + H2O = L-histidine + 2 NADH + 3 H(+). It participates in amino-acid biosynthesis; L-histidine biosynthesis; L-histidine from 5-phospho-alpha-D-ribose 1-diphosphate: step 9/9. Catalyzes the sequential NAD-dependent oxidations of L-histidinol to L-histidinaldehyde and then to L-histidine. The chain is Histidinol dehydrogenase (hisD) from Buchnera aphidicola subsp. Schlechtendalia chinensis.